The following is a 193-amino-acid chain: Fra a 1-associated protein (193 aa).

Residues 1-27 form a disordered region; sequence MGWVWKDDDEQGGHVNPSAADISPRLD.

Interacts with FRAA1E, FRAA2 and FRAA3.

This is Fra a 1-associated protein from Fragaria ananassa (Strawberry).